The sequence spans 507 residues: Cobyric acid synthase (507 aa).

Positions 249-451 constitute a GATase cobBQ-type domain; the sequence is DIEIAVINLP…IHGIFENREF (203 aa). Residue Cys330 is the Nucleophile of the active site. The active site involves His443.

Belongs to the CobB/CobQ family. CobQ subfamily.

It participates in cofactor biosynthesis; adenosylcobalamin biosynthesis. Catalyzes amidations at positions B, D, E, and G on adenosylcobyrinic A,C-diamide. NH(2) groups are provided by glutamine, and one molecule of ATP is hydrogenolyzed for each amidation. The polypeptide is Cobyric acid synthase (Thermoanaerobacter sp. (strain X514)).